Consider the following 403-residue polypeptide: Large ribosomal subunit protein uL3 (403 aa).

A disordered region spans residues 1–37 (MSHRKFSAPRHGSLGFLPRKRSSRHRGKVKSFPKDDP). Residue Ser-13 is modified to Phosphoserine. The span at 18–31 (PRKRSSRHRGKVKS) shows a compositional bias: basic residues. Residue Lys-39 forms a Glycyl lysine isopeptide (Lys-Gly) (interchain with G-Cter in SUMO2) linkage. Lys-136 carries the post-translational modification N6-acetyllysine. Residues Lys-224 and Lys-226 each participate in a glycyl lysine isopeptide (Lys-Gly) (interchain with G-Cter in SUMO2) cross-link. His-245 is modified (tele-methylhistidine). An N6-acetyllysine; alternate mark is found at Lys-286 and Lys-294. A Glycyl lysine isopeptide (Lys-Gly) (interchain with G-Cter in SUMO2); alternate cross-link involves residue Lys-286. Lys-294 is covalently cross-linked (Glycyl lysine isopeptide (Lys-Gly) (interchain with G-Cter in SUMO1); alternate). Phosphoserine is present on Ser-304. At Lys-366 the chain carries N6-acetyllysine; alternate. Lys-366 participates in a covalent cross-link: Glycyl lysine isopeptide (Lys-Gly) (interchain with G-Cter in SUMO2); alternate. Lys-373 bears the N6-acetyllysine mark. Glycyl lysine isopeptide (Lys-Gly) (interchain with G-Cter in SUMO2) cross-links involve residues Lys-386, Lys-393, and Lys-399.

This sequence belongs to the universal ribosomal protein uL3 family. In terms of assembly, component of the large ribosomal subunit. Interacts with DHX33. In terms of processing, constitutively monomethylated at His-245 by METTL18. Methylation at His-245 regulates translation elongation by slowing ribosome traversal on tyrosine codons: slower elongation provides enough time for proper folding of synthesized proteins and prevents cellular aggregation of tyrosine-rich proteins. It is not required for incorporation of RPL3 into ribosomes.

The protein resides in the nucleus. Its subcellular location is the nucleolus. It localises to the cytoplasm. Its function is as follows. Component of the large ribosomal subunit. The ribosome is a large ribonucleoprotein complex responsible for the synthesis of proteins in the cell. This is Large ribosomal subunit protein uL3 (Rpl3) from Rattus norvegicus (Rat).